A 509-amino-acid polypeptide reads, in one-letter code: Protein Jade-1 (509 aa).

The interval 1-45 (MKRGRLPSSSEDSDDNGSLSTTWSQNSRSQHRRSSCSRPEDRKPS) is disordered. The interval 60–80 (DSYQLNPDEYYVLADPWRQEW) is interaction with KAT7/HBO1 and histones. Positions 80 to 188 (WEKGVQVPVS…EQRCYDNMNH (109 aa)) are interaction with histones. The residue at position 89 (Ser-89) is a Phosphoserine. The residue at position 92 (Thr-92) is a Phosphothreonine. Residue Lys-114 forms a Glycyl lysine isopeptide (Lys-Gly) (interchain with G-Cter in SUMO2) linkage. Residues 203 to 253 (YVVCDVCQSPDGEDGNEMVFCDKCNICVHQACYGILKVPEGSWLCRTCALG) form a PHD-type 1 zinc finger. A C2HC pre-PHD-type zinc finger spans residues 255-289 (QPKCLLCPKKGGAMKPTRSGTKWVHVSCALWIPEV). The PHD-type 2 zinc-finger motif lies at 313 to 369 (LVCSLCNEKFGASIQCSVKNCRTAFHVTCAFDRGLEMKTILAENDEVKFKSYCPKHS). Residues 373-399 (KAEEGLGEGTAQENGAPECSPRDPLEP) form a disordered region.

It belongs to the JADE family. In terms of assembly, component of the HBO1 complex composed at least of ING4 or ING5, KAT7/HBO1, MEAF6, and one of JADE1, JADE2 and JADE3. Interacts with NPHP4.

It is found in the nucleus. The protein resides in the chromosome. Its subcellular location is the cytoplasm. It localises to the cytoskeleton. The protein localises to the cilium basal body. In terms of biological role, scaffold subunit of some HBO1 complexes, which have a histone H4 acetyltransferase activity. Plays a key role in HBO1 complex by directing KAT7/HBO1 specificity towards histone H4 acetylation (H4K5ac, H4K8ac and H4K12ac), regulating DNA replication initiation, regulating DNA replication initiation. May also promote acetylation of nucleosomal histone H4 by KAT5. Promotes apoptosis. May act as a renal tumor suppressor. Negatively regulates canonical Wnt signaling; at least in part, cooperates with NPHP4 in this function. This Bos taurus (Bovine) protein is Protein Jade-1 (JADE1).